We begin with the raw amino-acid sequence, 101 residues long: UPF0473 protein EF_1204 (101 aa).

Belongs to the UPF0473 family.

The sequence is that of UPF0473 protein EF_1204 from Enterococcus faecalis (strain ATCC 700802 / V583).